Here is a 273-residue protein sequence, read N- to C-terminus: Dermonecrotic toxin LhSicTox-alphaIA1iv (273 aa).

H5 is an active-site residue. Mg(2+) contacts are provided by E25 and D27. Residue H41 is the Nucleophile of the active site. Intrachain disulfides connect C45-C51 and C47-C190. D85 is a binding site for Mg(2+).

Belongs to the arthropod phospholipase D family. Class II subfamily. The cofactor is Mg(2+). Expressed by the venom gland.

It is found in the secreted. The enzyme catalyses an N-(acyl)-sphingosylphosphocholine = an N-(acyl)-sphingosyl-1,3-cyclic phosphate + choline. The catalysed reaction is an N-(acyl)-sphingosylphosphoethanolamine = an N-(acyl)-sphingosyl-1,3-cyclic phosphate + ethanolamine. It carries out the reaction a 1-acyl-sn-glycero-3-phosphocholine = a 1-acyl-sn-glycero-2,3-cyclic phosphate + choline. It catalyses the reaction a 1-acyl-sn-glycero-3-phosphoethanolamine = a 1-acyl-sn-glycero-2,3-cyclic phosphate + ethanolamine. Dermonecrotic toxins cleave the phosphodiester linkage between the phosphate and headgroup of certain phospholipids (sphingolipid and lysolipid substrates), forming an alcohol (often choline) and a cyclic phosphate. This toxin acts on sphingomyelin (SM). It may also act on ceramide phosphoethanolamine (CPE), lysophosphatidylcholine (LPC) and lysophosphatidylethanolamine (LPE), but not on lysophosphatidylserine (LPS), and lysophosphatidylglycerol (LPG). It acts by transphosphatidylation, releasing exclusively cyclic phosphate products as second products. Induces dermonecrosis, hemolysis, increased vascular permeability, edema, inflammatory response, and platelet aggregation. This chain is Dermonecrotic toxin LhSicTox-alphaIA1iv, found in Loxosceles hirsuta (Recluse spider).